A 261-amino-acid chain; its full sequence is Ubiquinone biosynthesis O-methyltransferase (261 aa).

The interval 1–22 is disordered; the sequence is MTMQVDPSANSSAASSAAPGTT. Residues 8–18 are compositionally biased toward low complexity; that stretch reads SANSSAASSAA. S-adenosyl-L-methionine is bound by residues R55, G86, D107, and M149.

The protein belongs to the methyltransferase superfamily. UbiG/COQ3 family.

It catalyses the reaction a 3-demethylubiquinol + S-adenosyl-L-methionine = a ubiquinol + S-adenosyl-L-homocysteine + H(+). It carries out the reaction a 3-(all-trans-polyprenyl)benzene-1,2-diol + S-adenosyl-L-methionine = a 2-methoxy-6-(all-trans-polyprenyl)phenol + S-adenosyl-L-homocysteine + H(+). It functions in the pathway cofactor biosynthesis; ubiquinone biosynthesis. In terms of biological role, O-methyltransferase that catalyzes the 2 O-methylation steps in the ubiquinone biosynthetic pathway. This Nitrobacter winogradskyi (strain ATCC 25391 / DSM 10237 / CIP 104748 / NCIMB 11846 / Nb-255) protein is Ubiquinone biosynthesis O-methyltransferase.